The following is a 175-amino-acid chain: Regenerating islet-derived protein 3-beta (175 aa).

The first 26 residues, 1–26 (MLHRLAFPVMSWMLLSCLMLLSQVQG), serve as a signal peptide directing secretion. Positions 27 to 37 (EDSPKKIPSAR) are excised as a propeptide. 3 disulfide bridges follow: C40–C51, C68–C171, and C146–C163. Residues 47–172 (YGSYCYALFQ…CEVKLPYVCK (126 aa)) enclose the C-type lectin domain. Zn(2+) is bound at residue H107. Positions 114-116 (EPN) match the EPN motif. E121 provides a ligand contact to Zn(2+).

Forms a hexameric membrane-permeabilizing oligomeric pore on membrane phospholipids. The hexamer is formed by three dimers related by helical symmetry. Forms filaments, filamentation traps pore complexes and limits damage to host cells. Interacts with EXTL3. In terms of processing, proteolytic processing by trypsin removes an inhibitory N-terminal propeptide and is essential for peptidoglycan binding and antibacterial activity. As to expression, constitutively expressed in intestine.

The protein localises to the secreted. Its activity is regulated as follows. Lipopolysaccharide inhibits pore-forming activity, explaining why is bactericidal for Gram-positive but not Gram-negative bacteria. Its function is as follows. Bactericidal C-type lectin which acts against several intestinal Gram-positive bacteria and Gram-negative bacteria. Lacks antibacterial activity against S.typhimurium. May play a role in protection against infection with S.enteritidis by inhibiting its translocation from the gut lumen into intestinal tissues and further extraintestinal tissues. In terms of biological role, acts as a hormone in response to different stimuli. Secreted by different cell types to activate its receptor EXTL3 and induce cell specific signaling pathways. In pancreas, is able stimulate cell proliferation. The chain is Regenerating islet-derived protein 3-beta from Rattus norvegicus (Rat).